Consider the following 1626-residue polypeptide: DNA topoisomerase 2-beta (1626 aa).

N-acetylalanine is present on alanine 2. N6-acetyllysine is present on lysine 3. Glycyl lysine isopeptide (Lys-Gly) (interchain with G-Cter in SUMO2) cross-links involve residues glutamine 28, asparagine 29, lysine 33, and lysine 34. Residues asparagine 112, asparagine 141, and 169–171 each bind ATP; that span reads SSN. Residues lysine 177 and lysine 178 each participate in a glycyl lysine isopeptide (Lys-Gly) (interchain with G-Cter in SUMO2) cross-link. 182–189 contributes to the ATP binding site; it reads GRNGYGAK. Glycyl lysine isopeptide (Lys-Gly) (interchain with G-Cter in SUMO2) cross-links involve residues lysine 228 and lysine 299. Positions 363 to 365 are interaction with DNA; the sequence is KKK. Glycyl lysine isopeptide (Lys-Gly) (interchain with G-Cter in SUMO2) cross-links involve residues lysine 367 and lysine 373. ATP is bound at residue 397–399; that stretch reads QTK. Glycyl lysine isopeptide (Lys-Gly) (interchain with G-Cter in SUMO2) cross-links involve residues lysine 437, lysine 439, and lysine 446. The region spanning 476–593 is the Toprim domain; that stretch reads CTLILTEGDS…SLLKHGFLEE (118 aa). Positions 482, 562, and 564 each coordinate Mg(2+). Residues lysine 600, lysine 605, lysine 635, lysine 643, lysine 646, lysine 676, and lysine 712 each participate in a glycyl lysine isopeptide (Lys-Gly) (interchain with G-Cter in SUMO2) cross-link. In terms of domain architecture, Topo IIA-type catalytic spans 736–1189; sequence IPSLVDGFKP…SPSDLWKEDL (454 aa). The active-site O-(5'-phospho-DNA)-tyrosine intermediate is tyrosine 826. An interaction with DNA region spans residues 1011 to 1020; the sequence is KLQTTLTCNS. Residues 1034–1044 carry the Nuclear export signal motif; that stretch reads ETVQDILKEFF. Residue lysine 1092 forms a Glycyl lysine isopeptide (Lys-Gly) (interchain with G-Cter in SUMO2) linkage. Residues 1110-1140 form a disordered region; it reads AWKEAQEKAAEEDETQNQHDDSSSDSGTPSG. Residues lysine 1214, lysine 1217, lysine 1226, and lysine 1227 each participate in a glycyl lysine isopeptide (Lys-Gly) (interchain with G-Cter in SUMO2) cross-link. Phosphoserine is present on serine 1236. Residues lysine 1250, lysine 1262, and lysine 1271 each participate in a glycyl lysine isopeptide (Lys-Gly) (interchain with G-Cter in SUMO2) cross-link. Positions 1274 to 1604 are disordered; the sequence is FDEEFSGAPV…PSLPRTGRAR (331 aa). Threonine 1292 carries the phosphothreonine modification. Residues lysine 1323 and lysine 1327 each participate in a glycyl lysine isopeptide (Lys-Gly) (interchain with G-Cter in SUMO2) cross-link. 2 stretches are compositionally biased toward basic and acidic residues: residues 1334–1344 and 1358–1370; these read PWSDDESKSES and SLLR…RPKY. A phosphoserine mark is found at serine 1336, serine 1340, serine 1342, serine 1344, and serine 1358. Tyrosine 1370 carries the phosphotyrosine modification. Positions 1374–1392 are enriched in acidic residues; the sequence is FSEEEDDDADDDDDDNNDL. Serine 1375 carries the phosphoserine modification. Residue lysine 1398 forms a Glycyl lysine isopeptide (Lys-Gly) (interchain with G-Cter in SUMO2) linkage. Serine 1400 carries the phosphoserine modification. Threonine 1403 is modified (phosphothreonine). Residue serine 1413 is modified to Phosphoserine. Residue tyrosine 1421 is modified to Phosphotyrosine. Serine 1424 carries the post-translational modification Phosphoserine. Residues 1430 to 1442 show a composition bias toward basic and acidic residues; it reads ATPEKSLHDKKSQ. A Glycyl lysine isopeptide (Lys-Gly) (interchain with G-Cter in SUMO2) cross-link involves residue lysine 1440. Phosphoserine is present on residues serine 1441, serine 1452, and serine 1454. Lysine 1456 participates in a covalent cross-link: Glycyl lysine isopeptide (Lys-Gly) (interchain with G-Cter in SUMO2). The segment covering 1456–1466 has biased composition (basic and acidic residues); the sequence is KSEDDSAKFDS. A phosphoserine mark is found at serine 1461, serine 1466, serine 1473, and serine 1476. Residue lysine 1490 forms a Glycyl lysine isopeptide (Lys-Gly) (interchain with G-Cter in SUMO2) linkage. Positions 1506-1512 are interaction with PLSCR1; it reads KPKRAPK. A phosphoserine mark is found at serine 1522, serine 1524, and serine 1526. A compositionally biased stretch (basic residues) spans 1539–1549; the sequence is GKGRGAKKRKA. Serine 1550 and serine 1552 each carry phosphoserine. A compositionally biased stretch (basic residues) spans 1563–1574; sequence KTSKTTSKKPKK. A Phosphothreonine modification is found at threonine 1575. A phosphoserine mark is found at serine 1576 and serine 1581. Phosphothreonine is present on threonine 1592. The residue at position 1596 (serine 1596) is a Phosphoserine. Tyrosine 1609 carries the phosphotyrosine modification. Serine 1613 is subject to Phosphoserine.

It belongs to the type II topoisomerase family. As to quaternary structure, homodimer. Interacts with KIAA1210. Interacts with PLSCR1. It depends on Mg(2+) as a cofactor. The cofactor is Mn(2+). Ca(2+) is required as a cofactor. (Microbial infection) Deubiquitinated by Epstein-Barr virus BPLF1; leading to stabilized SUMOylated TOP2A trapped in cleavage complexes, which halts the DNA damage response to TOP2A-induced double-strand DNA breaks. In terms of processing, SUMOylated. Expressed in the tonsil, spleen, lymph node, thymus, skin, pancreas, testis, colon, kidney, liver, brain and lung. Also found in breast, colon and lung carcinomas, Hodgkin's disease, large-cell non-Hodgkin's lymphoma, lymphocytic lymphomas and seminomas.

The protein resides in the nucleus. It localises to the nucleolus. It is found in the nucleoplasm. The catalysed reaction is ATP-dependent breakage, passage and rejoining of double-stranded DNA.. Key decatenating enzyme that alters DNA topology by binding to two double-stranded DNA molecules, generating a double-stranded break in one of the strands, passing the intact strand through the broken strand, and religating the broken strand. Plays a role in B-cell differentiation. The polypeptide is DNA topoisomerase 2-beta (TOP2B) (Homo sapiens (Human)).